We begin with the raw amino-acid sequence, 194 residues long: Major allergen Ani s 1 (194 aa).

A signal peptide spans 1–23 (MASMQHFSLAALLLAASICLGDA). Residues 28–84 (CQLPLDKGTPCTQEGGVKPSVAWWHDDKSGICLSFKYTGCGGNANRFTTIKNCEQHC) enclose the BPTI/Kunitz inhibitor domain. Intrachain disulfides connect cysteine 28–cysteine 84, cysteine 38–cysteine 67, and cysteine 59–cysteine 80. The WR1 domain maps to 90–134 (GACALGKKPAEDSNGEQLVCAGMREDKCPNGYQCKMMAFMGLCCP).

Its subcellular location is the secreted. This chain is Major allergen Ani s 1, found in Anisakis simplex (Herring worm).